We begin with the raw amino-acid sequence, 564 residues long: Protein glycosylation K (564 aa).

The Cytoplasmic portion of the chain corresponds to 1 to 15 (MLKKLFFILSKEDKN). A helical membrane pass occupies residues 16–38 (FLFFLLVFSVFISFIETFAISLV). The ABC transmembrane type-1 domain maps to 17-319 (LFFLLVFSVF…IITSYHDLLY (303 aa)). Over 39–76 (MPFITLASDFSYFDRNKYLISLKEYLNIPVFEIIVYFG) the chain is Extracellular. Positions 46 to 67 (SDFSYFDRNKYLISLKEYLNIP) are important for stimulation of ATPase activity by lipid-linked oligosaccharides and subsequent translocation of lipid-linked oligosaccharides. A helical membrane pass occupies residues 77–98 (VGLIVFYVFRALLNAYYFHLLA). The Cytoplasmic segment spans residues 99 to 149 (RFSKGRYHAIAYKVFSKFLNINYEKFTQKNQSEILKSITGEVYNLSTMISS). The helical transmembrane segment at 150–170 (FLLLMSEIFVVLLLYALMLLI) threads the bilayer. The Extracellular segment spans residues 171–173 (NYK). Residues 174–197 (ITLFLSIFMVLNAFILVKILSPII) form a helical membrane-spanning segment. At 198–254 (KKAGVRREEAMKNFFEILNTNLNNFKFIKLKTKEDGVLSLFKAQSEAFSKANITNES) the chain is on the cytoplasmic side. Residues 255–276 (VAAVPRIYLEGIGFCVLVFIVV) traverse the membrane as a helical segment. Residues 277–292 (FLVLKNESDISGILST) are Extracellular-facing. The helical transmembrane segment at 293–314 (ISIFVLALYRLMPSANRIITSY) threads the bilayer. The Cytoplasmic portion of the chain corresponds to 315–564 (HDLLYYHSSL…LEHGKLKEEK (250 aa)). An ABC transporter domain is found at 349–564 (LKICNLSFGY…LEHGKLKEEK (216 aa)). 382 to 389 (GESGCGKS) provides a ligand contact to ATP.

It belongs to the ABC transporter superfamily. In terms of assembly, homodimer; domain-swapped. Helices that arise in transmembrane regions 4 and 5 from one subunit cross over and contact the nucleotide-binding domain from the other subunit.

It is found in the cell inner membrane. It carries out the reaction ATP + H2O + lipopolysaccharideSide 1 = ADP + phosphate + lipopolysaccharideSide 2.. It participates in protein modification; protein glycosylation. Mediates the ATP-dependent translocation of the undecaprenylpyrophosphate-linked heptasaccharide intermediate across the cell membrane; this is an essential step during the N-linked protein glycosylation pathway. Transport across the membrane is effected via ATP-driven conformation changes. Most likely, only the polar and charged part of the glycolipid enter the substrate-binding cavity, and the lipid tail remains exposed to the membrane lipids during the transmembrane flipping process. The sequence is that of Protein glycosylation K (pglK) from Campylobacter jejuni subsp. jejuni serotype O:2 (strain ATCC 700819 / NCTC 11168).